Consider the following 230-residue polypeptide: Orotidine 5'-phosphate decarboxylase (230 aa).

Residues D10, K32, 59-68, T119, R180, Q189, G209, and R210 contribute to the substrate site; that span reads DLKYHDIPNT. Residue K61 is the Proton donor of the active site.

This sequence belongs to the OMP decarboxylase family. Type 1 subfamily. Homodimer.

It carries out the reaction orotidine 5'-phosphate + H(+) = UMP + CO2. Its pathway is pyrimidine metabolism; UMP biosynthesis via de novo pathway; UMP from orotate: step 2/2. Functionally, catalyzes the decarboxylation of orotidine 5'-monophosphate (OMP) to uridine 5'-monophosphate (UMP). The polypeptide is Orotidine 5'-phosphate decarboxylase (Haemophilus influenzae (strain PittEE)).